Consider the following 432-residue polypeptide: MQVTVETKEGLERVLTITVPAANIEDAVSAELRNIAKNRRFDGFRKGKVPMKMVAKMYGQAVRNDVMGEVMQRHFIEAIVKEKINPAGAPTFTPVEFAEGKDLVFTASFEVYPEVALQGLDKVVVEKPQVEVKDEDVAEMLETLRKQQSTWADADIAAEDGTRATINFVGSIDGEEFEGGKAENFPLEMGQGRMIPGFEDGIKGKKAGEELTIDVNFPEEYHAENLKGKAAQFAIKVVKVESRELPELNDEFVAKFGAEGGVEGLKAEVRKNMERELAQAVKNKIKEQAINGLVEQNNIDVPSALIDQEVQVLRQQAVQRFGGNADTAPELPRELFEEQAKRRVVVGLLLGEVIKSEELKADDEKVKALINEMASAYEDPTEVVAYYEGNEQMMNNMRNVALEEQAVEAILAKAQVSEKAFGFNELMNQQPA.

Residues 161–246 (GTRATINFVG…VVKVESRELP (86 aa)) form the PPIase FKBP-type domain.

This sequence belongs to the FKBP-type PPIase family. Tig subfamily.

It localises to the cytoplasm. It catalyses the reaction [protein]-peptidylproline (omega=180) = [protein]-peptidylproline (omega=0). Its function is as follows. Involved in protein export. Acts as a chaperone by maintaining the newly synthesized protein in an open conformation. Functions as a peptidyl-prolyl cis-trans isomerase. The polypeptide is Trigger factor (Aliivibrio fischeri (strain ATCC 700601 / ES114) (Vibrio fischeri)).